The chain runs to 330 residues: Methylthioribose-1-phosphate isomerase (330 aa).

Residues 49–51 (RGA), Arg83, and Gln179 contribute to the substrate site. Asp220 (proton donor) is an active-site residue. A substrate-binding site is contributed by 230–231 (NK).

This sequence belongs to the eIF-2B alpha/beta/delta subunits family. MtnA subfamily.

The enzyme catalyses 5-(methylsulfanyl)-alpha-D-ribose 1-phosphate = 5-(methylsulfanyl)-D-ribulose 1-phosphate. Its pathway is amino-acid biosynthesis; L-methionine biosynthesis via salvage pathway; L-methionine from S-methyl-5-thio-alpha-D-ribose 1-phosphate: step 1/6. Its function is as follows. Catalyzes the interconversion of methylthioribose-1-phosphate (MTR-1-P) into methylthioribulose-1-phosphate (MTRu-1-P). The chain is Methylthioribose-1-phosphate isomerase from Thermus thermophilus (strain ATCC BAA-163 / DSM 7039 / HB27).